A 374-amino-acid polypeptide reads, in one-letter code: Protein A6 homolog (374 aa).

Belongs to the chordopoxvirinae A6 family.

The protein localises to the virion. Its function is as follows. Plays an essential role in immature virion (IV) to mature virion (MV) transition. In Vertebrata (FPV), this protein is Protein A6 homolog.